The following is a 413-amino-acid chain: Transmembrane protein 184A (413 aa).

The next 7 helical transmembrane spans lie at 47-69, 93-113, 130-150, 187-207, 223-243, 258-278, and 300-320; these read WLFL…ALVL, LLLI…LLGD, FVIY…GAIM, LQFC…QAFG, VTLI…LFYF, FLTI…LAIL, and LAAG…SVAL. A disordered region spans residues 372 to 413; that stretch reads QHYTQQATHEAPRPGTHPSGGSGGSRKSRSLEKRMLIPSEDL.

Belongs to the TMEM184 family. As to expression, expressed in vascular cells (at protein level).

Its subcellular location is the cell membrane. The protein localises to the cytoplasm. The protein resides in the perinuclear region. It localises to the cytoplasmic vesicle membrane. It is found in the early endosome membrane. Its subcellular location is the endosome. The protein localises to the cytoplasmic vesicle. The protein resides in the secretory vesicle membrane. Its function is as follows. Acts as a heparin receptor in vascular cells. May be involved in vesicle transport in exocrine cells and Sertoli cells. The sequence is that of Transmembrane protein 184A (TMEM184A) from Homo sapiens (Human).